An 846-amino-acid chain; its full sequence is Homeodomain-interacting protein kinase 1 (846 aa).

The tract at residues 47–74 (NPFSIQKAPGTSSDNEQRAPKRRADEEA) is disordered. Over residues 61 to 72 (NEQRAPKRRADE) the composition is skewed to basic and acidic residues. The region spanning 147-483 (YEVLEFLGKG…PAEGLESKFV (337 aa)) is the Protein kinase domain. ATP is bound by residues 153–161 (LGKGTFGQV) and K176. Catalysis depends on D272, which acts as the Proton acceptor. The interval 741-790 (LAAQPKKNSPAPSVITLSSDEDSNGAGSSNSGSTTRTGAVNPVRNDTLPM) is disordered. Positions 746–757 (KKNSPAPSVITL) are enriched in polar residues. Residues 764–773 (NGAGSSNSGS) are compositionally biased toward low complexity.

Belongs to the protein kinase superfamily. CMGC Ser/Thr protein kinase family. HIPK subfamily. In terms of tissue distribution, broadly expressed during embryogenesis. Expression becomes more restricted during larval development. L3 larvae display robust expression in many head and motor neurons, and lower levels of expression in the intestine and the seam cells of the hypodermis. By late L4 stage, expression is largely restricted to neurons and is maintained in nerve cells of the head and nerve cord during adulthood. Expressed in adult pharyngeal cells, hypodermal cells, gonadal sheath cells and distal tip cells but not in germline cells. Expressed in serotonergic neurons such as ADF and NSM and in GABAergic neurons, including RME, RIS and DVB.

The protein resides in the nucleus. It catalyses the reaction L-seryl-[protein] + ATP = O-phospho-L-seryl-[protein] + ADP + H(+). The catalysed reaction is L-threonyl-[protein] + ATP = O-phospho-L-threonyl-[protein] + ADP + H(+). Serine/threonine-protein kinase required in the somatic gonadal cells to regulate germline proliferation during larval development and in adulthood. Plays a role in the development/differentiation of gonadal distal tip cells. Required for normal lifespan in a pha-4 and mxl-2-dependent manner. Also contributes to survival following heat or oxidative stress. Prevents sumoylation and inactivation of heat shock transcription factor hsf-1 which enhances hsf-1-dependent transcriptional induction of chaperones in response to heat shock. Also required for hormetic extension of longevity in response to heat stress. Also contributes to longevity by promoting autophagy under nutrient stress conditions through induction of autophagosome formation and autophagy gene expression. Provides protection against proteotoxic polyglutamine aggregate and the associated locomotory toxicity, probably as a result of kinase activity. Contributes to longevity via gamma-aminobutyric acid (GABA)ergic signaling by promoting autophagy through mxl-2, hlh-30 and daf-16 but independent of hsf-1 and phas-4, to induce autophagosome formation and the expression of autophagy genes. Promotes thermotolerance via serotonergic signaling by serotonergic neurons. Preserves neuronal function in aging animals by mitigating against age-associated decline in axonal and synaptic transmissions. Acts as an activator of nhr-49-dependent hypoxia response, including the up-regulation of fmo-2 and acs-2, the induction of autophagosome formation and expression of autophagy genes. The polypeptide is Homeodomain-interacting protein kinase 1 (Caenorhabditis elegans).